The chain runs to 199 residues: Cytochrome c oxidase subunit 2 (199 aa).

The chain crosses the membrane as a helical span at residues 1–13 (AICSLVLYLLTLM). Topologically, residues 14–26 (LMEKLSSNTVDAQ) are mitochondrial matrix. A helical membrane pass occupies residues 27-54 (EVELIWTILPAIVLILLALPSLQILYMM). At 55–199 (DEIDEPDLTL…SSLLSASSSL (145 aa)) the chain is on the mitochondrial intermembrane side. Residues His128, Cys163, Glu165, Cys167, His171, and Met174 each coordinate Cu cation. Glu165 contributes to the Mg(2+) binding site.

This sequence belongs to the cytochrome c oxidase subunit 2 family. Component of the cytochrome c oxidase (complex IV, CIV), a multisubunit enzyme composed of 14 subunits. The complex is composed of a catalytic core of 3 subunits MT-CO1, MT-CO2 and MT-CO3, encoded in the mitochondrial DNA, and 11 supernumerary subunits COX4I, COX5A, COX5B, COX6A, COX6B, COX6C, COX7A, COX7B, COX7C, COX8 and NDUFA4, which are encoded in the nuclear genome. The complex exists as a monomer or a dimer and forms supercomplexes (SCs) in the inner mitochondrial membrane with NADH-ubiquinone oxidoreductase (complex I, CI) and ubiquinol-cytochrome c oxidoreductase (cytochrome b-c1 complex, complex III, CIII), resulting in different assemblies (supercomplex SCI(1)III(2)IV(1) and megacomplex MCI(2)III(2)IV(2)). Found in a complex with TMEM177, COA6, COX18, COX20, SCO1 and SCO2. Interacts with TMEM177 in a COX20-dependent manner. Interacts with COX20. Interacts with COX16. Cu cation is required as a cofactor.

It localises to the mitochondrion inner membrane. The enzyme catalyses 4 Fe(II)-[cytochrome c] + O2 + 8 H(+)(in) = 4 Fe(III)-[cytochrome c] + 2 H2O + 4 H(+)(out). Functionally, component of the cytochrome c oxidase, the last enzyme in the mitochondrial electron transport chain which drives oxidative phosphorylation. The respiratory chain contains 3 multisubunit complexes succinate dehydrogenase (complex II, CII), ubiquinol-cytochrome c oxidoreductase (cytochrome b-c1 complex, complex III, CIII) and cytochrome c oxidase (complex IV, CIV), that cooperate to transfer electrons derived from NADH and succinate to molecular oxygen, creating an electrochemical gradient over the inner membrane that drives transmembrane transport and the ATP synthase. Cytochrome c oxidase is the component of the respiratory chain that catalyzes the reduction of oxygen to water. Electrons originating from reduced cytochrome c in the intermembrane space (IMS) are transferred via the dinuclear copper A center (CU(A)) of subunit 2 and heme A of subunit 1 to the active site in subunit 1, a binuclear center (BNC) formed by heme A3 and copper B (CU(B)). The BNC reduces molecular oxygen to 2 water molecules using 4 electrons from cytochrome c in the IMS and 4 protons from the mitochondrial matrix. The chain is Cytochrome c oxidase subunit 2 (MT-CO2) from Dromaius novaehollandiae (Emu).